Here is a 302-residue protein sequence, read N- to C-terminus: Ribosomal protein L11 methyltransferase (302 aa).

4 residues coordinate S-adenosyl-L-methionine: Thr-148, Gly-169, Asp-191, and Asn-237.

It belongs to the methyltransferase superfamily. PrmA family.

The protein localises to the cytoplasm. The catalysed reaction is L-lysyl-[protein] + 3 S-adenosyl-L-methionine = N(6),N(6),N(6)-trimethyl-L-lysyl-[protein] + 3 S-adenosyl-L-homocysteine + 3 H(+). Functionally, methylates ribosomal protein L11. In Desulfosudis oleivorans (strain DSM 6200 / JCM 39069 / Hxd3) (Desulfococcus oleovorans), this protein is Ribosomal protein L11 methyltransferase.